We begin with the raw amino-acid sequence, 219 residues long: Ribose-5-phosphate isomerase A (219 aa).

Substrate contacts are provided by residues 28–31 (TGST), 81–84 (DGAD), and 94–97 (KGGG). Catalysis depends on Glu103, which acts as the Proton acceptor. Lys121 is a binding site for substrate.

The protein belongs to the ribose 5-phosphate isomerase family. In terms of assembly, homodimer.

The enzyme catalyses aldehydo-D-ribose 5-phosphate = D-ribulose 5-phosphate. It functions in the pathway carbohydrate degradation; pentose phosphate pathway; D-ribose 5-phosphate from D-ribulose 5-phosphate (non-oxidative stage): step 1/1. Its function is as follows. Catalyzes the reversible conversion of ribose-5-phosphate to ribulose 5-phosphate. The chain is Ribose-5-phosphate isomerase A from Erwinia tasmaniensis (strain DSM 17950 / CFBP 7177 / CIP 109463 / NCPPB 4357 / Et1/99).